The primary structure comprises 79 residues: uncharacterized protein (79 aa).

An N-terminal signal peptide occupies residues 1–24 (MKMNPCTVILCKSLFFFCLFQVDC). N-linked (GlcNAc...) asparagine glycosylation occurs at Asn-33.

It localises to the secreted. This is an uncharacterized protein from Saccharomyces cerevisiae (strain ATCC 204508 / S288c) (Baker's yeast).